A 788-amino-acid polypeptide reads, in one-letter code: Structure-specific endonuclease subunit SLX4 (788 aa).

3 disordered regions span residues 59 to 86, 562 to 584, and 599 to 622; these read LQNENLENKNKDTSITKPKRRSKRDNNR, KRQPVDSENEIRDSEDEGEHDNS, and DLVNLGRNPRNENDTSVLQVPSSP. Residues 562–573 are compositionally biased toward basic and acidic residues; sequence KRQPVDSENEIR. The segment covering 612–622 has biased composition (polar residues); the sequence is DTSVLQVPSSP.

Belongs to the SLX4 family. As to quaternary structure, forms a heterodimer with SLX1. In terms of processing, phosphorylated in response to DNA damage.

Its subcellular location is the nucleus. Functionally, regulatory subunit of the SLX1-SLX4 structure-specific endonuclease that resolves DNA secondary structures generated during DNA repair and recombination. Has endonuclease activity towards branched DNA substrates, introducing single-strand cuts in duplex DNA close to junctions with ss-DNA. The polypeptide is Structure-specific endonuclease subunit SLX4 (Debaryomyces hansenii (strain ATCC 36239 / CBS 767 / BCRC 21394 / JCM 1990 / NBRC 0083 / IGC 2968) (Yeast)).